The sequence spans 409 residues: Threonine dehydratase-like protein AKTS1-1 (409 aa).

A disordered region spans residues 1–21; it reads MADYLRQVMPENDSDSEALPR. An N6-(pyridoxal phosphate)lysine modification is found at Lys111. Pyridoxal 5'-phosphate contacts are provided by residues Asn138, 239-243, and Ser368; that span reads GEGSL.

It belongs to the serine/threonine dehydratase family. The cofactor is pyridoxal 5'-phosphate.

Its pathway is mycotoxin biosynthesis. Threonine dehydratase-like protein; part of the gene clusters that mediate the biosynthesis of the host-selective toxins (HSTs) AK-toxins responsible for Japanese pear black spot disease by the Japanese pear pathotype. AK-toxins are esters of 9,10-epoxy 8-hydroxy 9-methyldecatrienoic acid (EDA). On cellular level, AK-toxins affect plasma membrane of susceptible cells and cause a sudden increase in loss of K(+) after a few minutes of toxin treatment. The acyl-CoA ligase AKT1, the hydrolase AKT2 and enoyl-CoA hydratase AKT3 are all involved in the biosynthesis of the AK-, AF- and ACT-toxin common 9,10-epoxy-8-hydroxy-9-methyl-decatrienoic acid (EDA) structural moiety. Part of the EDA biosynthesis occurs in the peroxisome since these 3 enzymes are localized in peroxisomes. The exact roles of the 3 enzymes, as well as of additional AK-toxin clusters enzymes, including AKT4, AKT6 and AKTS1, have still to be elucidated. The Cytochrome P450 monooxygenase AKT7 on the other side functions to limit production of EDA and AK-toxin, probably via the catalysis of a side reaction of EDA or its precursor. The chain is Threonine dehydratase-like protein AKTS1-1 from Alternaria alternata (Alternaria rot fungus).